A 104-amino-acid chain; its full sequence is Protein RnfH (104 aa).

The protein belongs to the UPF0125 (RnfH) family.

This is Protein RnfH from Pseudomonas syringae pv. syringae (strain B728a).